The primary structure comprises 311 residues: R2-like ligand binding oxidase (311 aa).

Mn(2+)-binding residues include E68, E101, and H104. A cross-link (3-(O4'-tyrosyl)-valine (Val-Tyr)) is located at residues 71-162; the sequence is VTQDIQPFMA…AAQVRASVTY (92 aa). E101 is a Fe cation binding site. Fe cation is bound by residues E167, E202, and H205.

Belongs to the ribonucleoside diphosphate reductase small chain family. R2-like ligand binding oxidase subfamily. In terms of assembly, homodimer. Fe cation is required as a cofactor. Requires Mn(2+) as cofactor.

Functionally, probable oxidase that might be involved in lipid metabolism. This chain is R2-like ligand binding oxidase, found in Mycolicibacterium paratuberculosis (strain ATCC BAA-968 / K-10) (Mycobacterium paratuberculosis).